The sequence spans 377 residues: Chaperone protein DnaJ (377 aa).

Positions 5-69 constitute a J domain; the sequence is DYYEVLGVSK…NKRANYDQFG (65 aa). The CR-type zinc finger occupies 134-216; it reads GTEKEISIRK…CHGKGTETKN (83 aa). Residues Cys-147, Cys-150, Cys-164, Cys-167, Cys-190, Cys-193, Cys-204, and Cys-207 each coordinate Zn(2+). 4 CXXCXGXG motif repeats span residues 147–154, 164–171, 190–197, and 204–211; these read CETCDGSG, CHYCNGSG, CPVCNGTG, and CPTCHGKG.

This sequence belongs to the DnaJ family. In terms of assembly, homodimer. It depends on Zn(2+) as a cofactor.

It localises to the cytoplasm. Participates actively in the response to hyperosmotic and heat shock by preventing the aggregation of stress-denatured proteins and by disaggregating proteins, also in an autonomous, DnaK-independent fashion. Unfolded proteins bind initially to DnaJ; upon interaction with the DnaJ-bound protein, DnaK hydrolyzes its bound ATP, resulting in the formation of a stable complex. GrpE releases ADP from DnaK; ATP binding to DnaK triggers the release of the substrate protein, thus completing the reaction cycle. Several rounds of ATP-dependent interactions between DnaJ, DnaK and GrpE are required for fully efficient folding. Also involved, together with DnaK and GrpE, in the DNA replication of plasmids through activation of initiation proteins. In Staphylococcus carnosus (strain TM300), this protein is Chaperone protein DnaJ.